Consider the following 269-residue polypeptide: GTP cyclohydrolase FolE2 (269 aa).

The protein belongs to the GTP cyclohydrolase IV family.

The enzyme catalyses GTP + H2O = 7,8-dihydroneopterin 3'-triphosphate + formate + H(+). It functions in the pathway cofactor biosynthesis; 7,8-dihydroneopterin triphosphate biosynthesis; 7,8-dihydroneopterin triphosphate from GTP: step 1/1. Converts GTP to 7,8-dihydroneopterin triphosphate. This is GTP cyclohydrolase FolE2 from Thiobacillus denitrificans (strain ATCC 25259 / T1).